The chain runs to 421 residues: GTPase Obg (421 aa).

The Obg domain occupies 1 to 158; the sequence is MFIDVAKIEL…KTIKLELKLL (158 aa). A disordered region spans residues 21-40; that stretch reads AFRREKYEPSGGPAGGDGGD. The OBG-type G domain occupies 159 to 328; that stretch reads ADVGLIGLPN…LMYLIADTLD (170 aa). GTP contacts are provided by residues 165–172, 190–194, 211–214, 281–284, and 309–311; these read GLPNVGKS, FTTLE, DIPG, NKTD, and SAA. Residues serine 172 and threonine 192 each coordinate Mg(2+). The region spanning 344–421 is the OCT domain; it reads FEEEKEPDFK…IGDVEFDFYE (78 aa).

Belongs to the TRAFAC class OBG-HflX-like GTPase superfamily. OBG GTPase family. Monomer. Mg(2+) serves as cofactor.

The protein resides in the cytoplasm. Its function is as follows. An essential GTPase which binds GTP, GDP and possibly (p)ppGpp with moderate affinity, with high nucleotide exchange rates and a fairly low GTP hydrolysis rate. Plays a role in control of the cell cycle, stress response, ribosome biogenesis and in those bacteria that undergo differentiation, in morphogenesis control. This is GTPase Obg from Finegoldia magna (strain ATCC 29328 / DSM 20472 / WAL 2508) (Peptostreptococcus magnus).